A 258-amino-acid chain; its full sequence is Membrane-associated protein Vipp1 (258 aa).

The tract at residues 217–258 (MLPPATPVTQAQLPPQQETTPAKSNEVVDAELDSLRKQLDQL) is disordered. Over residues 223–239 (PVTQAQLPPQQETTPAK) the composition is skewed to polar residues. Residues 249 to 258 (DSLRKQLDQL) show a composition bias toward basic and acidic residues.

The protein belongs to the PspA/Vipp/IM30 family. In terms of assembly, polymerizes to form rings, filaments and ribbons. Rings are formed by stacked rungs that tilt to give a dome-shaped curvature. Rings form with symmetries ranging from C11 (55 subunits) to C17 (119 subunits).

It localises to the cell inner membrane. A membrane remodeling protein capable of forming rings and/or filaments on membranes, which then curve and tubulate the bilayer. Rings will form on liposomes, altering their positive curvature so the lipid bilayer is remodeled into a negative curve as the membrane enters the ring. Ring stacks of varying lengths can be seen joining isolated liposomes. A lipid monolayer can be drawn into the center of the rings. Required for thylakoid formation. This is Membrane-associated protein Vipp1 from Nostoc punctiforme (strain ATCC 29133 / PCC 73102).